The primary structure comprises 263 residues: MNHIKDTLKIGSHTFASRLIVGSGKYKDFATTKEATLASGAEIITVAVRRVNIMDNKSENLLETFKDTNIQFLPNSAGCVNAKEAITLFRLVREATGIDFIKLEIIGDIDKTLYPDVIESLQATEILANEGFCVLAYTNDDPIMAKRLENAGASAIMPLAAPIGSGLGIQNRYNIGFIKEAVKVPVIVDAGVGCASDASIAMELGADAVLTNTAIAQAQNPVTMAEAMKYAVKAGRLSYLAGRIPRKAYASASSPLEGMMQFG.

The active-site Schiff-base intermediate with DXP is the lysine 102. 1-deoxy-D-xylulose 5-phosphate contacts are provided by residues glycine 164, 190–191 (AG), and 212–213 (NT).

This sequence belongs to the ThiG family. In terms of assembly, homotetramer. Forms heterodimers with either ThiH or ThiS.

The protein localises to the cytoplasm. It carries out the reaction [ThiS sulfur-carrier protein]-C-terminal-Gly-aminoethanethioate + 2-iminoacetate + 1-deoxy-D-xylulose 5-phosphate = [ThiS sulfur-carrier protein]-C-terminal Gly-Gly + 2-[(2R,5Z)-2-carboxy-4-methylthiazol-5(2H)-ylidene]ethyl phosphate + 2 H2O + H(+). It participates in cofactor biosynthesis; thiamine diphosphate biosynthesis. Catalyzes the rearrangement of 1-deoxy-D-xylulose 5-phosphate (DXP) to produce the thiazole phosphate moiety of thiamine. Sulfur is provided by the thiocarboxylate moiety of the carrier protein ThiS. In vitro, sulfur can be provided by H(2)S. The protein is Thiazole synthase of Helicobacter hepaticus (strain ATCC 51449 / 3B1).